A 130-amino-acid chain; its full sequence is Small ribosomal subunit protein uS8 (130 aa).

This sequence belongs to the universal ribosomal protein uS8 family. In terms of assembly, part of the 30S ribosomal subunit. Contacts proteins S5 and S12.

One of the primary rRNA binding proteins, it binds directly to 16S rRNA central domain where it helps coordinate assembly of the platform of the 30S subunit. The chain is Small ribosomal subunit protein uS8 from Cronobacter sakazakii (strain ATCC BAA-894) (Enterobacter sakazakii).